The chain runs to 171 residues: Co-chaperone protein HscB homolog (171 aa).

The region spanning 2–74 (NYFELFGLPI…LRRAEYLLSL (73 aa)) is the J domain.

It belongs to the HscB family. Interacts with HscA and stimulates its ATPase activity.

Its function is as follows. Co-chaperone involved in the maturation of iron-sulfur cluster-containing proteins. Seems to help targeting proteins to be folded toward HscA. The chain is Co-chaperone protein HscB homolog from Vibrio cholerae serotype O1 (strain ATCC 39541 / Classical Ogawa 395 / O395).